Consider the following 279-residue polypeptide: Undecaprenyl-diphosphatase (279 aa).

Helical transmembrane passes span phenylalanine 10 to isoleucine 30, leucine 48 to phenylalanine 68, leucine 96 to leucine 116, glycine 128 to isoleucine 148, serine 203 to phenylalanine 223, isoleucine 229 to isoleucine 249, and asparagine 259 to leucine 279.

It belongs to the UppP family.

Its subcellular location is the cell inner membrane. The catalysed reaction is di-trans,octa-cis-undecaprenyl diphosphate + H2O = di-trans,octa-cis-undecaprenyl phosphate + phosphate + H(+). Its function is as follows. Catalyzes the dephosphorylation of undecaprenyl diphosphate (UPP). Confers resistance to bacitracin. The protein is Undecaprenyl-diphosphatase of Prochlorococcus marinus (strain NATL2A).